The chain runs to 402 residues: NADH-quinone oxidoreductase subunit D (402 aa).

Belongs to the complex I 49 kDa subunit family. In terms of assembly, NDH-1 is composed of 14 different subunits. Subunits NuoB, C, D, E, F, and G constitute the peripheral sector of the complex.

It localises to the cell inner membrane. It catalyses the reaction a quinone + NADH + 5 H(+)(in) = a quinol + NAD(+) + 4 H(+)(out). In terms of biological role, NDH-1 shuttles electrons from NADH, via FMN and iron-sulfur (Fe-S) centers, to quinones in the respiratory chain. The immediate electron acceptor for the enzyme in this species is believed to be ubiquinone. Couples the redox reaction to proton translocation (for every two electrons transferred, four hydrogen ions are translocated across the cytoplasmic membrane), and thus conserves the redox energy in a proton gradient. The sequence is that of NADH-quinone oxidoreductase subunit D from Azorhizobium caulinodans (strain ATCC 43989 / DSM 5975 / JCM 20966 / LMG 6465 / NBRC 14845 / NCIMB 13405 / ORS 571).